The sequence spans 354 residues: Probable L-ascorbate-6-phosphate lactonase UlaG (354 aa).

The protein belongs to the UlaG family. The cofactor is a divalent metal cation.

The protein localises to the cytoplasm. The catalysed reaction is L-ascorbate 6-phosphate + H2O = 3-dehydro-L-gulonate 6-phosphate. It participates in cofactor degradation; L-ascorbate degradation; D-xylulose 5-phosphate from L-ascorbate: step 1/4. In terms of biological role, probably catalyzes the hydrolysis of L-ascorbate-6-P into 3-keto-L-gulonate-6-P. Is essential for L-ascorbate utilization under anaerobic conditions. The sequence is that of Probable L-ascorbate-6-phosphate lactonase UlaG from Salmonella choleraesuis (strain SC-B67).